The sequence spans 82 residues: MVTIRLARHGAKKRPFYQIVVADSRNVATGRFIEKVGFFNPTAQGQEEGLRIDLDRVNHWVGQGASLSDRVAKLVKDAQKAA.

This sequence belongs to the bacterial ribosomal protein bS16 family.

The protein is Small ribosomal subunit protein bS16 of Vibrio vulnificus (strain CMCP6).